Consider the following 72-residue polypeptide: UPF0270 protein YheU (72 aa).

It belongs to the UPF0270 family.

This Salmonella agona (strain SL483) protein is UPF0270 protein YheU.